The chain runs to 335 residues: Acetyl-coenzyme A carboxylase carboxyl transferase subunit alpha (335 aa).

In terms of domain architecture, CoA carboxyltransferase C-terminal spans 40-294; that stretch reads QLETLATRRR…KASIERHLSE (255 aa).

It belongs to the AccA family. As to quaternary structure, acetyl-CoA carboxylase is a heterohexamer composed of biotin carboxyl carrier protein (AccB), biotin carboxylase (AccC) and two subunits each of ACCase subunit alpha (AccA) and ACCase subunit beta (AccD).

It is found in the cytoplasm. The catalysed reaction is N(6)-carboxybiotinyl-L-lysyl-[protein] + acetyl-CoA = N(6)-biotinyl-L-lysyl-[protein] + malonyl-CoA. Its pathway is lipid metabolism; malonyl-CoA biosynthesis; malonyl-CoA from acetyl-CoA: step 1/1. Functionally, component of the acetyl coenzyme A carboxylase (ACC) complex. First, biotin carboxylase catalyzes the carboxylation of biotin on its carrier protein (BCCP) and then the CO(2) group is transferred by the carboxyltransferase to acetyl-CoA to form malonyl-CoA. This Prochlorococcus marinus (strain MIT 9515) protein is Acetyl-coenzyme A carboxylase carboxyl transferase subunit alpha.